We begin with the raw amino-acid sequence, 366 residues long: Polyprenyl transferase AOL_s00215g276 (366 aa).

The disordered stretch occupies residues 1–22 (MESIIARPRTRSSAKEKTQTMS). Helical transmembrane passes span 53–73 (LHTL…CLSA), 85–105 (FLSV…AFCT), 137–157 (IIAF…TLGF), 160–180 (ALVC…KRVV), 185–205 (LVLG…VAGN), 212–232 (AVPM…IYAT), and 253–273 (HMHQ…SFTA). An N-linked (GlcNAc...) asparagine glycan is attached at N277. 2 helical membrane passes run 281–301 (LFWS…LLSL) and 312–332 (VFLM…IELW). Residue N352 is glycosylated (N-linked (GlcNAc...) asparagine).

The protein belongs to the UbiA prenyltransferase family. Mg(2+) is required as a cofactor.

Its subcellular location is the membrane. The protein operates within secondary metabolite biosynthesis; terpenoid biosynthesis. In terms of biological role, polyprenyl transferase; part of the gene cluster that mediates the biosynthesis of sesquiterpenyl epoxy-cyclohexenoids (SECs) such as anthrobotrisins and arthrosporols, metabolites that possess a novel hybrid carbon skeleton consisting of a polyketide-derived epoxycyclohexenol combined with a terpenoid-derived monocyclic sesquiterpenol substructure (PKS-PTS hybrid). The SEC pathway plays an important role for fungal soil colonization via decreasing fungal nematode-capturing ability. Within the pathway, the polyprenyl transferase catalyzes the farnesylation of toluquinol to yield farnesyl hydroquinone, the first hybrid precursor for biosynthesis of SECs, and farnesyl quinone (34) might be the key precursor for the epoxy ring formation. The pathway begins with the biosynthesis of 6-methylsalicylic acid (6-MSA), the first precursor of the polyketide-derived epoxycyclohexenol in arthrosporols, by the polyketide synthase (PKS) AOL_s00215g283 via condensation of 1 acetate and 3 malonate units. The 6-methylsalicylic acid decarboxylase AOL_s00215g281 then catalyzes the decarboxylation of 6-methylsalicylic acid to yield m-cresol. The cytochrome P450 monooxygenase AOL_s00215g282 further oxidizes m-cresol to yield toluquinol. With the assistance of the oxidoreductase AOL_s00215g277, the polyprenyl transferase AOL_s00215g276 catalyzes the farnesylation of toluquinol to produce farnesyl hydroquinone, the hybrid precursor for biosynthesis of SECs. Farnesyl hydroquinone undergoes epoxidation and then subsequent dehydrogenation to form farnesyl epoxy-quinone, the first and simplest SEC. The cytochrome P450 monooxygenase AOL_s00215g278 and the FAD-dependent monooxygenase AOL_s00215g279 might be involved in the oxygenation of the phenol moiety, most likely in the epoxy formation. The cytochrome P450 monooxygenases AOL_s00215g274 and AOL_s00215g280 are involved in specific regional ketone reductions at respectively C-4 and C-1 of farnesyl epoxy-quinone PubMed:33823587. The chain is Polyprenyl transferase AOL_s00215g276 from Arthrobotrys oligospora (strain ATCC 24927 / CBS 115.81 / DSM 1491) (Nematode-trapping fungus).